Reading from the N-terminus, the 108-residue chain is Cytochrome c oxidase subunit 1 (108 aa).

The helical transmembrane segment at 10 to 30 (AFVAPVLGLLGFIPGGAGGIV) threads the bilayer. H49 lines the heme a3 pocket. Helical transmembrane passes span 50–70 (FHLQ…YWLL) and 85–105 (LGLA…VGLH). Residue H51 participates in Fe(II)-heme a binding.

Belongs to the heme-copper respiratory oxidase family. It depends on heme as a cofactor. The cofactor is Cu cation.

It localises to the cell membrane. The catalysed reaction is 4 Fe(II)-[cytochrome c] + O2 + 8 H(+)(in) = 4 Fe(III)-[cytochrome c] + 2 H2O + 4 H(+)(out). The protein operates within energy metabolism; oxidative phosphorylation. The protein is Cytochrome c oxidase subunit 1 (cbaA) of Thermus thermophilus.